The following is a 175-amino-acid chain: Pituitary adenylate cyclase-activating polypeptide (175 aa).

An N-terminal signal peptide occupies residues 1–24; that stretch reads MTMCSGARLALLVYGIIMHNSVSC. Positions 25 to 78 are excised as a propeptide; that stretch reads SPAAGLSFPGIRPEEEAYDQDGNPLQDFYDWDPPGAGSPASALRDAYALYYPAD. Residues 149-157 are important for receptor binding; that stretch reads VKKYLAAVL. Leucine 157 is subject to Leucine amide. Lysine 168 is subject to Lysine amide. Positions 172–175 are excised as a propeptide; the sequence is IAYL.

Belongs to the glucagon family.

It localises to the secreted. Its function is as follows. PACAP is a neuropeptide involved in diverse array of physiological processes through activating the PACAP subfamily of class B1 G protein-coupled receptors: VIP receptor 1 (VIPR1), VIP receptor 2 (VIPR2), and PACAP type I receptor (ADCYAP1R1). Exerts neuroprotective and general cytoprotective effects due to anti-apoptotic, anti-inflammatory, and antioxidant actions. Promotes neuron projection development through the RAPGEF2/Rap1/B-Raf/ERK pathway. In chromaffin cells, induces long-lasting increase of intracellular calcium concentrations and neuroendocrine secretion. Involved in the control of glucose homeostasis, induces insulin secretion by pancreatic beta cells. PACAP exists in two bioactive forms from proteolysis of the same precursor protein, PACAP27 and PACAP38, which differ by eleven amino acid residues in the C-terminus. This chain is Pituitary adenylate cyclase-activating polypeptide (Adcyap1), found in Rattus norvegicus (Rat).